The sequence spans 317 residues: Large ribosomal subunit protein uL10 (317 aa).

Residues Ser-280 to Ala-290 are compositionally biased toward low complexity. The tract at residues Ser-280 to Asp-317 is disordered. Residues Thr-291–Ser-302 show a composition bias toward basic and acidic residues. At Ser-302 the chain carries Phosphoserine. Ser-304 carries the phosphoserine; by CK1 modification.

Belongs to the universal ribosomal protein uL10 family. As to quaternary structure, P0 forms a pentameric complex by interaction with dimers of P1 and P2.

It is found in the cytoplasm. Its subcellular location is the nucleus. Ribosomal protein P0 is the functional equivalent of E.coli protein L10. In Drosophila melanogaster (Fruit fly), this protein is Large ribosomal subunit protein uL10 (RpLP0).